A 129-amino-acid chain; its full sequence is Small ribosomal subunit protein uS11 (129 aa).

Belongs to the universal ribosomal protein uS11 family. Part of the 30S ribosomal subunit. Interacts with proteins S7 and S18. Binds to IF-3.

Its function is as follows. Located on the platform of the 30S subunit, it bridges several disparate RNA helices of the 16S rRNA. Forms part of the Shine-Dalgarno cleft in the 70S ribosome. This Paracoccus denitrificans (strain Pd 1222) protein is Small ribosomal subunit protein uS11.